Reading from the N-terminus, the 439-residue chain is MEGGLRTGRLPKAPELSLQSFPSEWSWVWTYPLFHKLAAFACHASQAWLTVGITSESREGPNGLLDTLASLYHTSSTSEQKQMTVLVHLADSDPTWLRRTIIRISSLYRSQILTGQLLLIHAPPDAYPAVNDAQNKVSRGQIYSKQNVDHAFLMSFATKLSTYFLLIEDNVFCAPNFVNHIRSKVGYRKPNTWVLLEFSNMGFLGKLLHSRDLPLLAHFLLLFHKERPLNWLLLHFRTLLGQQSSILCRPFLFYHRLTHLTFENKTLIGHEKDPPDPYTLSGTVYTDMRFSDTHSPQEAYTLDESFFWSYNVTTGNYLTVILNNPANLNRVQVRTGSITDGKYILEKGQVELGYDPEGTPPQCTSFTLLGRLVQGQMDQFILESIGYKVSCVKLAVNANQVGGLMIRHIYIWGENAKNRKDVQIDNDDDDDDDDYDDDS.

It functions in the pathway protein modification; protein glycosylation. In terms of biological role, glycosyltransferase-like protein that may participate in the transfer of N-acetylglucosamine (GlcNAc) to the core mannose residues of N-linked glycans. The sequence is that of Alpha-1,3-mannosyl-glycoprotein 4-beta-N-acetylglucosaminyltransferase-like protein MGAT4E from Mus musculus (Mouse).